A 143-amino-acid polypeptide reads, in one-letter code: Small ribosomal subunit protein bS6 (143 aa).

The tract at residues 95–143 is disordered; sequence GPDTEQSFIMKSKDDKGDKPERRRRDDDENGDVGVSNDSDNDGGNAEAA. Residues 105–121 are compositionally biased toward basic and acidic residues; the sequence is KSKDDKGDKPERRRRDD.

It belongs to the bacterial ribosomal protein bS6 family.

Its function is as follows. Binds together with bS18 to 16S ribosomal RNA. This Xylella fastidiosa (strain M23) protein is Small ribosomal subunit protein bS6.